A 359-amino-acid chain; its full sequence is Isopentenyl-diphosphate delta-isomerase (359 aa).

A substrate-binding site is contributed by 12 to 13 (RK). Residues serine 68, 69-71 (AMT), serine 99, and asparagine 128 each bind FMN. 99–101 (SQR) contacts substrate. Glutamine 162 serves as a coordination point for substrate. Glutamate 163 provides a ligand contact to Mg(2+). Residues lysine 194, threonine 224, 277-279 (GIR), and 298-299 (AL) contribute to the FMN site.

This sequence belongs to the IPP isomerase type 2 family. Homooctamer. Dimer of tetramers. The cofactor is FMN. It depends on NADPH as a cofactor. Mg(2+) serves as cofactor.

The protein localises to the cytoplasm. The catalysed reaction is isopentenyl diphosphate = dimethylallyl diphosphate. Involved in the biosynthesis of isoprenoids. Catalyzes the 1,3-allylic rearrangement of the homoallylic substrate isopentenyl (IPP) to its allylic isomer, dimethylallyl diphosphate (DMAPP). This is Isopentenyl-diphosphate delta-isomerase from Methanoregula boonei (strain DSM 21154 / JCM 14090 / 6A8).